The chain runs to 343 residues: Palmitoyltransferase ZDHHC4 (343 aa).

Residues 1–2 (MD) are Lumenal-facing. A helical membrane pass occupies residues 3–23 (FLVLFLFYLAFLLICVVLICI). At 24–67 (FTKSQRLKAVVLGGAQVCSRVIPQCLQRAVQTLLHQLFHTRHPT) the chain is on the cytoplasmic side. A helical membrane pass occupies residues 68-88 (FIVLHLLLQGLVYAEYTCEVF). Topologically, residues 89–100 (GYCRELEFSLPY) are lumenal. A helical membrane pass occupies residues 101-121 (LLLPYVLLSVNLVFFTLTCAA). Residues 122-193 (NPGTITKANE…NCIGAWNTRY (72 aa)) are Cytoplasmic-facing. The region spanning 149-199 (SRCPTCDLRKPARSKHCRLCDRCVHRFDHHCVWVNNCIGAWNTRYFLIYLL) is the DHHC domain. Residue cysteine 179 is the S-palmitoyl cysteine intermediate of the active site. The chain crosses the membrane as a helical span at residues 194-214 (FLIYLLTLTASAATIATVTAA). At 215 to 255 (FLLRLVTVSDLYQETYLDDVGHFQAVDTVFLIQHLFLAFPR) the chain is on the lumenal side. Residues 256–276 (IVFLLGFVIVLSMLLAGYLCF) form a helical membrane-spanning segment. The Cytoplasmic segment spans residues 277 to 343 (ALYLAATNQT…ATPSYKKKEK (67 aa)). The Di-lysine motif motif lies at 340–343 (KKEK).

Belongs to the DHHC palmitoyltransferase family. In terms of assembly, interacts with CPT1A.

It is found in the endoplasmic reticulum membrane. The protein resides in the golgi apparatus membrane. It localises to the cell membrane. It catalyses the reaction L-cysteinyl-[protein] + hexadecanoyl-CoA = S-hexadecanoyl-L-cysteinyl-[protein] + CoA. Its function is as follows. Palmitoyltransferase that could catalyze the addition of palmitate onto protein substrates including the D(2) dopamine receptor DRD2, GSK3B or MAVS. Mediates GSK3B palmitoylation to prevent its AKT1-mediated phosphorylation leading to activation of the STAT3 signaling pathway. Also catalyzes MAVS palmitoylation which promotes its stabilization and activation by inhibiting 'Lys-48'- but facilitating 'Lys-63'-linked ubiquitination. The polypeptide is Palmitoyltransferase ZDHHC4 (Mus musculus (Mouse)).